The chain runs to 82 residues: Conotoxin Cal30 (82 aa).

Positions 1 to 19 are cleaved as a signal peptide; that stretch reads MEKLIILLLVASLLVTTDS.

May contain 5 disulfide bonds. In terms of tissue distribution, expressed by the venom duct.

Its subcellular location is the secreted. In terms of biological role, probable neurotoxin. This chain is Conotoxin Cal30, found in Californiconus californicus (California cone).